The following is a 127-amino-acid chain: Small ribosomal subunit protein uS13 (127 aa).

Positions 92-127 (HRQGLPVRGQRTRTNARTRRGRRLTVAGKKKAPSKK) are disordered. Positions 101–127 (QRTRTNARTRRGRRLTVAGKKKAPSKK) are enriched in basic residues.

It belongs to the universal ribosomal protein uS13 family. In terms of assembly, part of the 30S ribosomal subunit. Forms a loose heterodimer with protein S19. Forms two bridges to the 50S subunit in the 70S ribosome.

Located at the top of the head of the 30S subunit, it contacts several helices of the 16S rRNA. In the 70S ribosome it contacts the 23S rRNA (bridge B1a) and protein L5 of the 50S subunit (bridge B1b), connecting the 2 subunits; these bridges are implicated in subunit movement. Contacts the tRNAs in the A and P-sites. This Gloeothece citriformis (strain PCC 7424) (Cyanothece sp. (strain PCC 7424)) protein is Small ribosomal subunit protein uS13.